Here is a 119-residue protein sequence, read N- to C-terminus: Large ribosomal subunit protein uL14c (119 aa).

This sequence belongs to the universal ribosomal protein uL14 family. As to quaternary structure, part of the 50S ribosomal subunit.

The protein localises to the plastid. Its subcellular location is the chloroplast. Binds to 23S rRNA. This is Large ribosomal subunit protein uL14c from Ostreococcus tauri.